The sequence spans 243 residues: uncharacterized protein (243 aa).

A disordered region spans residues 157-181 (SEETKEQPDATTSEKSRSPECPKTT).

This is an uncharacterized protein from Rattus norvegicus (Rat).